A 1166-amino-acid chain; its full sequence is ATP-dependent helicase/deoxyribonuclease subunit B (1166 aa).

Residues 1 to 285 enclose the UvrD-like helicase ATP-binding domain; it reads MGAVFLSGRS…VRLEETKRHR (285 aa). Residue 8 to 15 coordinates ATP; it reads GRSGSGKT. The region spanning 279–586 is the UvrD-like helicase C-terminal domain; that stretch reads EETKRHRHHP…KFALIPPALD (308 aa). [4Fe-4S] cluster is bound by residues C801, C1121, C1124, and C1130.

This sequence belongs to the helicase family. AddB/RexB type 1 subfamily. In terms of assembly, heterodimer of AddA and AddB. The cofactor is Mg(2+). Requires [4Fe-4S] cluster as cofactor.

In terms of biological role, the heterodimer acts as both an ATP-dependent DNA helicase and an ATP-dependent, dual-direction single-stranded exonuclease. Recognizes the chi site generating a DNA molecule suitable for the initiation of homologous recombination. The AddB subunit has 5' -&gt; 3' nuclease activity but not helicase activity. The polypeptide is ATP-dependent helicase/deoxyribonuclease subunit B (Bacillus licheniformis (strain ATCC 14580 / DSM 13 / JCM 2505 / CCUG 7422 / NBRC 12200 / NCIMB 9375 / NCTC 10341 / NRRL NRS-1264 / Gibson 46)).